Consider the following 259-residue polypeptide: Ubiquinone/menaquinone biosynthesis C-methyltransferase UbiE (259 aa).

S-adenosyl-L-methionine-binding positions include Thr82, Asp103, 131-132 (NA), and Ser148.

It belongs to the class I-like SAM-binding methyltransferase superfamily. MenG/UbiE family.

It carries out the reaction a 2-demethylmenaquinol + S-adenosyl-L-methionine = a menaquinol + S-adenosyl-L-homocysteine + H(+). The catalysed reaction is a 2-methoxy-6-(all-trans-polyprenyl)benzene-1,4-diol + S-adenosyl-L-methionine = a 5-methoxy-2-methyl-3-(all-trans-polyprenyl)benzene-1,4-diol + S-adenosyl-L-homocysteine + H(+). It functions in the pathway quinol/quinone metabolism; menaquinone biosynthesis; menaquinol from 1,4-dihydroxy-2-naphthoate: step 2/2. Its pathway is cofactor biosynthesis; ubiquinone biosynthesis. In terms of biological role, methyltransferase required for the conversion of demethylmenaquinol (DMKH2) to menaquinol (MKH2) and the conversion of 2-polyprenyl-6-methoxy-1,4-benzoquinol (DDMQH2) to 2-polyprenyl-3-methyl-6-methoxy-1,4-benzoquinol (DMQH2). This Haemophilus ducreyi (strain 35000HP / ATCC 700724) protein is Ubiquinone/menaquinone biosynthesis C-methyltransferase UbiE.